We begin with the raw amino-acid sequence, 475 residues long: Probable 5'-adenylylsulfate reductase 1, chloroplastic (475 aa).

A chloroplast-targeting transit peptide spans 1–63 (MASATASISS…AAEPARQPVS (63 aa)). A reductase domain region spans residues 72 to 327 (AAPVAEDAAA…KAKECGLHKG (256 aa)). In terms of domain architecture, Thioredoxin spans 341–475 (HKAGGANGNG…SLLAFVNSLR (135 aa)). Catalysis depends on nucleophile residues Cys-393 and Cys-396. A disulfide bridge connects residues Cys-393 and Cys-396.

This sequence belongs to the APS reductase family. Requires [4Fe-4S] cluster as cofactor.

It is found in the plastid. Its subcellular location is the chloroplast. It carries out the reaction glutathione disulfide + sulfite + AMP + 2 H(+) = adenosine 5'-phosphosulfate + 2 glutathione. Reduces sulfate for Cys biosynthesis. The polypeptide is Probable 5'-adenylylsulfate reductase 1, chloroplastic (APR1) (Oryza sativa subsp. japonica (Rice)).